Reading from the N-terminus, the 223-residue chain is Small ribosomal subunit protein uS3 (223 aa).

The KH type-2 domain maps to 39-107 (VREFLHKKLA…PVQINIEEVR (69 aa)).

Belongs to the universal ribosomal protein uS3 family. Part of the 30S ribosomal subunit. Forms a tight complex with proteins S10 and S14.

Its function is as follows. Binds the lower part of the 30S subunit head. Binds mRNA in the 70S ribosome, positioning it for translation. This is Small ribosomal subunit protein uS3 from Francisella tularensis subsp. novicida (strain U112).